The primary structure comprises 378 residues: Queuine tRNA-ribosyltransferase (378 aa).

The Proton acceptor role is filled by D91. Substrate is bound by residues 91–95, D145, Q197, and G224; that span reads DSGGF. D274 (nucleophile) is an active-site residue. Residues 279 to 283 form an RNA binding; important for wobble base 34 recognition region; it reads TRLAR. Zn(2+) is bound by residues C312, C314, C317, and H343.

This sequence belongs to the queuine tRNA-ribosyltransferase family. As to quaternary structure, homodimer. Within each dimer, one monomer is responsible for RNA recognition and catalysis, while the other monomer binds to the replacement base PreQ1. Zn(2+) serves as cofactor.

The enzyme catalyses 7-aminomethyl-7-carbaguanine + guanosine(34) in tRNA = 7-aminomethyl-7-carbaguanosine(34) in tRNA + guanine. It functions in the pathway tRNA modification; tRNA-queuosine biosynthesis. Functionally, catalyzes the base-exchange of a guanine (G) residue with the queuine precursor 7-aminomethyl-7-deazaguanine (PreQ1) at position 34 (anticodon wobble position) in tRNAs with GU(N) anticodons (tRNA-Asp, -Asn, -His and -Tyr). Catalysis occurs through a double-displacement mechanism. The nucleophile active site attacks the C1' of nucleotide 34 to detach the guanine base from the RNA, forming a covalent enzyme-RNA intermediate. The proton acceptor active site deprotonates the incoming PreQ1, allowing a nucleophilic attack on the C1' of the ribose to form the product. After dissociation, two additional enzymatic reactions on the tRNA convert PreQ1 to queuine (Q), resulting in the hypermodified nucleoside queuosine (7-(((4,5-cis-dihydroxy-2-cyclopenten-1-yl)amino)methyl)-7-deazaguanosine). This is Queuine tRNA-ribosyltransferase from Methylacidiphilum infernorum (isolate V4) (Methylokorus infernorum (strain V4)).